Here is a 112-residue protein sequence, read N- to C-terminus: Tetracenomycin-F1 monooxygenase (112 aa).

The ABM domain maps to 11 to 100 (FTLVNVFGVA…SRPKPIFCEV (90 aa)).

In terms of assembly, homotrimer.

The catalysed reaction is tetracenomycin F1 + O2 = tetracenomycin D3 + H2O + H(+). Its pathway is antibiotic biosynthesis; tetracenomycin C biosynthesis. Inhibited by p-chloromercuribenzoic acid, N-ethylmaleimide and diethyl pyrocarbonate. In terms of biological role, oxygenase required for conversion of tetracenomycin F1 to tetracenomycin D3. In Streptomyces glaucescens, this protein is Tetracenomycin-F1 monooxygenase (tcmH).